Here is a 409-residue protein sequence, read N- to C-terminus: NADH-quinone oxidoreductase subunit D (409 aa).

It belongs to the complex I 49 kDa subunit family. NDH-1 is composed of 14 different subunits. Subunits NuoB, C, D, E, F, and G constitute the peripheral sector of the complex.

The protein localises to the cell inner membrane. The enzyme catalyses a quinone + NADH + 5 H(+)(in) = a quinol + NAD(+) + 4 H(+)(out). In terms of biological role, NDH-1 shuttles electrons from NADH, via FMN and iron-sulfur (Fe-S) centers, to quinones in the respiratory chain. The immediate electron acceptor for the enzyme in this species is believed to be ubiquinone. Couples the redox reaction to proton translocation (for every two electrons transferred, four hydrogen ions are translocated across the cytoplasmic membrane), and thus conserves the redox energy in a proton gradient. This Helicobacter hepaticus (strain ATCC 51449 / 3B1) protein is NADH-quinone oxidoreductase subunit D.